A 225-amino-acid polypeptide reads, in one-letter code: MNSMRFSLLDRTTQNSVISTTSNDLSNWSRLSSLWPLLYGTSCCFIEFASLIGSRFDFDRYGLVPRSSPRQADIILTAGTVTMKMAPSLVRLYEQMPEPKYVIAMGACTITGGMFSTDSYSTVRGVDKLIPVDVYLPGCPPKPEAIIDAITKLRKKLSREIYEDRIGCQQENRCFTTNHKFRVGRSTHTGNYDQGLLYQSPSTSEIPFESFLKYKSSVSSHELVN.

Residues C43, C44, C108, and C139 each contribute to the [4Fe-4S] cluster site.

Belongs to the complex I 20 kDa subunit family. In terms of assembly, NDH is composed of at least 16 different subunits, 5 of which are encoded in the nucleus. [4Fe-4S] cluster serves as cofactor.

The protein resides in the plastid. Its subcellular location is the chloroplast thylakoid membrane. It catalyses the reaction a plastoquinone + NADH + (n+1) H(+)(in) = a plastoquinol + NAD(+) + n H(+)(out). The enzyme catalyses a plastoquinone + NADPH + (n+1) H(+)(in) = a plastoquinol + NADP(+) + n H(+)(out). NDH shuttles electrons from NAD(P)H:plastoquinone, via FMN and iron-sulfur (Fe-S) centers, to quinones in the photosynthetic chain and possibly in a chloroplast respiratory chain. The immediate electron acceptor for the enzyme in this species is believed to be plastoquinone. Couples the redox reaction to proton translocation, and thus conserves the redox energy in a proton gradient. The polypeptide is NAD(P)H-quinone oxidoreductase subunit K, chloroplastic (Illicium oligandrum (Star anise)).